A 317-amino-acid chain; its full sequence is Aspartate carbamoyltransferase catalytic subunit (317 aa).

2 residues coordinate carbamoyl phosphate: R66 and T67. K94 is a binding site for L-aspartate. Residues R116, H144, and Q147 each contribute to the carbamoyl phosphate site. L-aspartate is bound by residues R177 and R231. Residues G272 and P273 each contribute to the carbamoyl phosphate site.

The protein belongs to the aspartate/ornithine carbamoyltransferase superfamily. ATCase family. Heterododecamer (2C3:3R2) of six catalytic PyrB chains organized as two trimers (C3), and six regulatory PyrI chains organized as three dimers (R2).

The catalysed reaction is carbamoyl phosphate + L-aspartate = N-carbamoyl-L-aspartate + phosphate + H(+). Its pathway is pyrimidine metabolism; UMP biosynthesis via de novo pathway; (S)-dihydroorotate from bicarbonate: step 2/3. Catalyzes the condensation of carbamoyl phosphate and aspartate to form carbamoyl aspartate and inorganic phosphate, the committed step in the de novo pyrimidine nucleotide biosynthesis pathway. This chain is Aspartate carbamoyltransferase catalytic subunit, found in Rhodopseudomonas palustris (strain HaA2).